The following is a 95-amino-acid chain: U6 snRNA-associated Sm-like protein LSm2 (95 aa).

Residues 2–76 (LFYSFFKSLV…VRYVQLPADE (75 aa)) enclose the Sm domain. Threonine 79 is modified (phosphothreonine).

The protein belongs to the snRNP Sm proteins family. In terms of assembly, component of the precatalytic spliceosome (spliceosome B complex). Component of the U4/U6-U5 tri-snRNP complex, a building block of the precatalytic spliceosome (spliceosome B complex). The U4/U6-U5 tri-snRNP complex is composed of the U4, U6 and U5 snRNAs and at least PRPF3, PRPF4, PRPF6, PRPF8, PRPF31, SNRNP200, TXNL4A, SNRNP40, SNRPB, SNRPD1, SNRPD2, SNRPD3, SNRPE, SNRPF, SNRPG, DDX23, CD2BP2, PPIH, SNU13, EFTUD2, SART1 and USP39, plus LSM2, LSM3, LSM4, LSM5, LSM6, LSM7 and LSM8. LSM2, LSM3, LSM4, LSM5, LSM6, LSM7 and LSM8 form a heptameric, ring-shaped subcomplex (the LSM2-8 complex) that is part of the U4/U6-U5 tri-snRNP complex and the precatalytic spliceosome.

Its subcellular location is the nucleus. Functionally, plays a role in pre-mRNA splicing as component of the U4/U6-U5 tri-snRNP complex that is involved in spliceosome assembly, and as component of the precatalytic spliceosome (spliceosome B complex). The heptameric LSM2-8 complex binds specifically to the 3'-terminal U-tract of U6 snRNA. In Homo sapiens (Human), this protein is U6 snRNA-associated Sm-like protein LSm2 (LSM2).